We begin with the raw amino-acid sequence, 261 residues long: WW domain-binding protein 2 (261 aa).

In terms of domain architecture, GRAM spans 1–84 (MALNKNHSEG…YLMKDCEIKQ (84 aa)). Tyr-192 carries the post-translational modification Phosphotyrosine. The PPxY motif 1 motif lies at 196 to 200 (PPPPY). Over residues 196–209 (PPPPYPGPMEPPVS) the composition is skewed to pro residues. The interval 196–261 (PPPPYPGPME…YYPPEDKKTQ (66 aa)) is disordered. Low complexity predominate over residues 210–230 (GPSAPATPAAEAKAAEAAASA). Tyr-231 carries the phosphotyrosine modification. Pro residues predominate over residues 245-254 (SQPPPPPYYP). The short motif at 248 to 252 (PPPPY) is the PPxY motif 2 element.

In terms of assembly, binds to the WW domain of YAP1, WWP1 and WWP2. Interacts with NEDD4. Interacts with ESR1 and UBE3A. Post-translationally, phosphorylated in repsonse to EGF as well as estrogen and progesterone hormones. Tyr-192 and Tyr-231 are phosphorylated by YES and SRC inducing nuclear translocation. Expressed in the ear and the eye. Isoform 1 is expressed in brain, inner ear and organ of Corti. Isoform 2 is only detected in brain.

The protein localises to the cytoplasm. The protein resides in the nucleus. Its function is as follows. Acts as a transcriptional coactivator of estrogen and progesterone receptors (ESR1 and PGR) upon hormone activation. In presence of estrogen, binds to ESR1-responsive promoters. Synergizes with YAP1 to enhance PGR activity. Modulates expression of post-synaptic scaffolding proteins via regulation of ESR1, ESR2 and PGR. This is WW domain-binding protein 2 (Wbp2) from Mus musculus (Mouse).